The primary structure comprises 167 residues: Large ribosomal subunit protein uL10 (167 aa).

Belongs to the universal ribosomal protein uL10 family. Part of the ribosomal stalk of the 50S ribosomal subunit. The N-terminus interacts with L11 and the large rRNA to form the base of the stalk. The C-terminus forms an elongated spine to which L12 dimers bind in a sequential fashion forming a multimeric L10(L12)X complex.

Its function is as follows. Forms part of the ribosomal stalk, playing a central role in the interaction of the ribosome with GTP-bound translation factors. This is Large ribosomal subunit protein uL10 from Psychromonas ingrahamii (strain DSM 17664 / CCUG 51855 / 37).